The following is a 247-amino-acid chain: MPRKKQNERGTNKQEIINIETKSSTFQEKQRQSKTDQISTVWRKEQKKQELKVHTELHPQHRTGFNEDKGTDPWLTTWRIITVILGTSCIILVTKVGFLIPNLFSRGEKRSRELSLLDSLCLKNNDSFCDLCSHDWIAFGNNFYLFFRGTKTWAESKSACEELNSYLLDIDSRAELENLLLFEINGWILFKTDAINRSLRKNYIKIHQTLFNDSEKKNHSCHYLSGNQFSAGDCSSKKAYTCEFNLQ.

A compositionally biased stretch (basic and acidic residues) spans 1–12 (MPRKKQNERGTN). Positions 1–39 (MPRKKQNERGTNKQEIINIETKSSTFQEKQRQSKTDQIS) are disordered. Residues 1-79 (MPRKKQNERG…GTDPWLTTWR (79 aa)) are Cytoplasmic-facing. The helical transmembrane segment at 80 to 100 (IITVILGTSCIILVTKVGFLI) threads the bilayer. Residues 101-247 (PNLFSRGEKR…KAYTCEFNLQ (147 aa)) are Extracellular-facing. 4 N-linked (GlcNAc...) asparagine glycosylation sites follow: Asn-125, Asn-196, Asn-212, and Asn-218. Residues 139-243 (FGNNFYLFFR…CSSKKAYTCE (105 aa)) enclose the C-type lectin domain. Intrachain disulfides connect Cys-160/Cys-242 and Cys-221/Cys-234.

As to quaternary structure, heterodimer with KLRE1. As to expression, expressed in natural killer (NK) cells.

It is found in the cell membrane. Lectin-like receptor for natural killer (NK) cells. Heterodimer formation with KLRE1 mediates NK cell cytolytic activity. In Rattus norvegicus (Rat), this protein is Killer cell lectin-like receptor subfamily I member 2.